The sequence spans 363 residues: S-adenosylmethionine:tRNA ribosyltransferase-isomerase (363 aa).

It belongs to the QueA family. As to quaternary structure, monomer.

The protein localises to the cytoplasm. The enzyme catalyses 7-aminomethyl-7-carbaguanosine(34) in tRNA + S-adenosyl-L-methionine = epoxyqueuosine(34) in tRNA + adenine + L-methionine + 2 H(+). Its pathway is tRNA modification; tRNA-queuosine biosynthesis. Its function is as follows. Transfers and isomerizes the ribose moiety from AdoMet to the 7-aminomethyl group of 7-deazaguanine (preQ1-tRNA) to give epoxyqueuosine (oQ-tRNA). This Haemophilus influenzae (strain PittGG) protein is S-adenosylmethionine:tRNA ribosyltransferase-isomerase.